Reading from the N-terminus, the 292-residue chain is Ribosomal protein L11 methyltransferase (292 aa).

S-adenosyl-L-methionine is bound by residues T143, G164, D186, and N228.

This sequence belongs to the methyltransferase superfamily. PrmA family.

Its subcellular location is the cytoplasm. It carries out the reaction L-lysyl-[protein] + 3 S-adenosyl-L-methionine = N(6),N(6),N(6)-trimethyl-L-lysyl-[protein] + 3 S-adenosyl-L-homocysteine + 3 H(+). Methylates ribosomal protein L11. In Tolumonas auensis (strain DSM 9187 / NBRC 110442 / TA 4), this protein is Ribosomal protein L11 methyltransferase.